Here is a 140-residue protein sequence, read N- to C-terminus: Complex III assembly factor LYRM7 (140 aa).

Residues 93–140 (QYEFVNDQPPQRKKRGKIQIDDEQPTTCCGGGCGKPMPSNNSEKSTCS) form a disordered region. Residues 130 to 140 (PSNNSEKSTCS) show a composition bias toward polar residues.

The protein belongs to the complex I LYR family. As to quaternary structure, interacts with UQCRFS1.

It localises to the mitochondrion matrix. In terms of biological role, assembly factor required for Rieske Fe-S protein UQCRFS1 incorporation into the cytochrome b-c1 (CIII) complex. Functions as a chaperone, binding to this subunit within the mitochondrial matrix and stabilizing it prior to its translocation and insertion into the late CIII dimeric intermediate within the mitochondrial inner membrane. This chain is Complex III assembly factor LYRM7 (lyrm7), found in Dictyostelium discoideum (Social amoeba).